A 94-amino-acid polypeptide reads, in one-letter code: Phosphoribosyl-ATP pyrophosphatase (94 aa).

This sequence belongs to the PRA-PH family.

It is found in the cytoplasm. The catalysed reaction is 1-(5-phospho-beta-D-ribosyl)-ATP + H2O = 1-(5-phospho-beta-D-ribosyl)-5'-AMP + diphosphate + H(+). It functions in the pathway amino-acid biosynthesis; L-histidine biosynthesis; L-histidine from 5-phospho-alpha-D-ribose 1-diphosphate: step 2/9. The polypeptide is Phosphoribosyl-ATP pyrophosphatase (Saccharolobus islandicus (strain M.16.27) (Sulfolobus islandicus)).